The chain runs to 139 residues: Ribonuclease P protein component (139 aa).

The tract at residues 120-139 (KATTGGECTPKSEKCVTAPR) is disordered.

This sequence belongs to the RnpA family. In terms of assembly, consists of a catalytic RNA component (M1 or rnpB) and a protein subunit.

It carries out the reaction Endonucleolytic cleavage of RNA, removing 5'-extranucleotides from tRNA precursor.. In terms of biological role, RNaseP catalyzes the removal of the 5'-leader sequence from pre-tRNA to produce the mature 5'-terminus. It can also cleave other RNA substrates such as 4.5S RNA. The protein component plays an auxiliary but essential role in vivo by binding to the 5'-leader sequence and broadening the substrate specificity of the ribozyme. This Chlamydia pneumoniae (Chlamydophila pneumoniae) protein is Ribonuclease P protein component.